Consider the following 156-residue polypeptide: Small ribosomal subunit protein uS7 (156 aa).

This sequence belongs to the universal ribosomal protein uS7 family. Part of the 30S ribosomal subunit. Contacts proteins S9 and S11.

In terms of biological role, one of the primary rRNA binding proteins, it binds directly to 16S rRNA where it nucleates assembly of the head domain of the 30S subunit. Is located at the subunit interface close to the decoding center, probably blocks exit of the E-site tRNA. This Cronobacter sakazakii (strain ATCC BAA-894) (Enterobacter sakazakii) protein is Small ribosomal subunit protein uS7.